Here is a 1622-residue protein sequence, read N- to C-terminus: DNA (cytosine-5)-methyltransferase 1 (1622 aa).

Residues 1–145 (MPARTAPARV…RRSKSDSETM (145 aa)) are interaction with DNMT3A. Interaction with the PRC2/EED-EZH2 complex regions lie at residues 1–342 (MPAR…VERK) and 304–610 (TPEP…TVIN). The residue at position 15 (Ser-15) is a Phosphoserine. Residues 16–109 (PAGSLPDHVR…TQKANGCPAN (94 aa)) form the DMAP1-binding domain. Lys-70 is modified (N6,N6-dimethyllysine; by EHMT2). Positions 100 to 360 (TQKANGCPAN…IPKLNPPQCP (261 aa)) are disordered. A compositionally biased stretch (basic residues) spans 126 to 137 (PRSRPKPRGPRR). Ser-138 bears the Phosphoserine mark. An N6-methyllysine; by SETD7 modification is found at Lys-139. Position 140 is a phosphoserine; by PKB/AKT1 (Ser-140). Residues 146–213 (IEASSSSVAT…TESRASRAGE (68 aa)) form an interaction with DNMT3B region. Phosphoserine occurs at positions 149 and 151. Low complexity predominate over residues 149–166 (SSSSVATRRTTRQTTITS). The residue at position 163 (Thr-163) is a Phosphothreonine. An N6-acetyllysine modification is found at Lys-169. The short motif at 173–200 (KRKPKEDSEKGNANESAAEERDQDKKRR) is the Nuclear localization signal element. Basic and acidic residues-rich tracts occupy residues 176–197 (PKED…DQDK), 207–222 (RASR…ERVR), 237–269 (DDRR…THLD), and 276–300 (KDKR…KEEV). Residue Thr-304 is modified to Phosphothreonine. Positions 327 to 556 (KPEPLSIPVQ…NVNRFTEDSL (230 aa)) are DNA replication foci-targeting sequence. Residues Cys-359 and Cys-362 each contribute to the Zn(2+) site. Lys-372 bears the N6-acetyllysine mark. Ser-400 is subject to Phosphoserine. Zn(2+)-binding residues include Cys-420 and His-424. Phosphoserine is present on residues Ser-515 and Ser-555. The segment at 650 to 696 (NTMKRRRCGVCEVCQQPECGKCKACKDMVKFGGTGRSKQACLKRRCP) adopts a CXXC-type zinc-finger fold. Residues Cys-657, Cys-660, Cys-663, Cys-668, Cys-671, Cys-674, Cys-690, and Cys-695 each coordinate Zn(2+). The tract at residues 697–758 (NLAVKEADED…TYYWKVSIDE (62 aa)) is autoinhibitory linker. The tract at residues 702–733 (EADEDEEADDDIPELPSPKKLHQGKKKKQNKD) is disordered. The span at 703-714 (ADEDEEADDDIP) shows a compositional bias: acidic residues. Ser-718 bears the Phosphoserine mark. The segment covering 720-731 (KKLHQGKKKKQN) has biased composition (basic residues). Ser-736 carries the phosphoserine modification. Lys-753 carries the post-translational modification N6-acetyllysine. The 126-residue stretch at 759–884 (ETLEVGDCVS…QDYARFESPP (126 aa)) folds into the BAH 1 domain. Ser-882 carries the phosphoserine modification. N6-acetyllysine is present on residues Lys-895, Lys-961, and Lys-980. Residues 977-1105 (TYRKYSDYIK…SKTKSFEDPP (129 aa)) form the BAH 2 domain. The interval 1099 to 1138 (KSFEDPPNHARSPGNKGKGKGKGKGKGKPQVSEPKEPEAA) is disordered. 6 repeat units span residues 1114–1115 (KG), 1116–1117 (KG), 1118–1119 (KG), 1120–1121 (KG), 1122–1123 (KG), and 1124–1125 (KG). Residues 1114 to 1127 (KGKGKGKGKGKGKP) form a 7 X 2 AA tandem repeats of K-G region. A compositionally biased stretch (basic residues) spans 1115–1125 (GKGKGKGKGKG). 6 positions are modified to N6-acetyllysine: Lys-1116, Lys-1118, Lys-1120, Lys-1122, Lys-1124, and Lys-1126. Residues 1126–1127 (KP) form a 7; approximate repeat. Residues 1126-1622 (KPQVSEPKEP…KGKEETTTED (497 aa)) are interaction with the PRC2/EED-EZH2 complex. In terms of domain architecture, SAM-dependent MTase C5-type spans 1144–1603 (LRTLDVFSGC…LEIKLCLLAS (460 aa)). The tract at residues 1144–1622 (LRTLDVFSGC…KGKEETTTED (479 aa)) is catalytic. Residues Ser-1151, 1155 to 1156 (GL), 1173 to 1174 (EM), 1195 to 1196 (DC), and Cys-1196 contribute to the S-adenosyl-L-methionine site. Cys-1231 is a catalytic residue. N6-acetyllysine is present on Lys-1354. Position 1436 is a phosphoserine (Ser-1436). S-adenosyl-L-methionine contacts are provided by Asn-1582 and Val-1584. Lys-1613 participates in a covalent cross-link: Glycyl lysine isopeptide (Lys-Gly) (interchain with G-Cter in SUMO2).

The protein belongs to the class I-like SAM-binding methyltransferase superfamily. C5-methyltransferase family. Homodimer. Forms a stable complex with E2F1, BB1 and HDAC1. Forms a complex with DMAP1 and HDAC2, with direct interaction. Interacts with the PRC2/EED-EZH2 complex. Probably part of a corepressor complex containing ZNF304, TRIM28, SETDB1 and DNMT1. Interacts with UHRF1; promoting its recruitment to hemimethylated DNA. Interacts with USP7, promoting its deubiquitination. Interacts with PCNA. Interacts with MBD2 and MBD3. Interacts with DNMT3A and DNMT3B. Interacts with UBC9. Interacts with CSNK1D. Interacts with HDAC1. Interacts with BAZ2A/TIP5. Interacts with SIRT7. Interacts with ZNF263; recruited to the SIX3 promoter along with other proteins involved in chromatin modification and transcriptional corepression where it contributes to transcriptional repression. Interacts with L3MBTL3 and DCAF5; the interaction requires DNMT1 methylation at Lys-139 and is necessary to target DNMT1 for ubiquitination by the CRL4-DCAF5 E3 ubiquitin ligase complex and proteasomal degradation. Interacts with PHF20L1; the interaction requires DNMT1 methylation at Lys-139 and protects DNMT1 from ubiquitination and proteasomal degradation. Post-translationally, sumoylated; sumoylation increases activity. In terms of processing, acetylation on multiple lysines, mainly by KAT2B/PCAF, regulates cell cycle G(2)/M transition. Deacetylation of Lys-1116 and Lys-1354 by SIRT1 increases methyltransferase activity. Phosphorylation of Ser-151 by CDKs is important for enzymatic activity and protein stability. Phosphorylation of Ser-140 by AKT1 prevents methylation by SETD7 thereby increasing DNMT1 stability. Post-translationally, methylation at Lys-139 by SETD7 is necessary for the regulation of DNMT1 proteasomal degradation. In terms of processing, ubiquitinated by UHRF1; interaction with USP7 counteracts ubiquitination by UHRF1 by promoting deubiquitination and preventing degradation by the proteasome. As to expression, isoforms 0 and 8 are highly expressed in placenta, brain, lung, spleen, kidney, heart, and at much lower levels in liver. Isoform 1 is expressed in cerebellum, isoform 2 in muscle and testis, isoform 3 in lung, isoform 4 in spleen and brain, and isoform 5 in brain.

Its subcellular location is the nucleus. It carries out the reaction a 2'-deoxycytidine in DNA + S-adenosyl-L-methionine = a 5-methyl-2'-deoxycytidine in DNA + S-adenosyl-L-homocysteine + H(+). Functionally, methylates CpG residues. Preferentially methylates hemimethylated DNA. Associates with DNA replication sites in S phase maintaining the methylation pattern in the newly synthesized strand, that is essential for epigenetic inheritance. Associates with chromatin during G2 and M phases to maintain DNA methylation independently of replication. It is responsible for maintaining methylation patterns established in development. DNA methylation is coordinated with methylation of histones. Mediates transcriptional repression by direct binding to HDAC2. In association with DNMT3B and via the recruitment of CTCFL/BORIS, involved in activation of BAG1 gene expression by modulating dimethylation of promoter histone H3 at H3K4 and H3K9. Probably forms a corepressor complex required for activated KRAS-mediated promoter hypermethylation and transcriptional silencing of tumor suppressor genes (TSGs) or other tumor-related genes in colorectal cancer (CRC) cells. Also required to maintain a transcriptionally repressive state of genes in undifferentiated embryonic stem cells (ESCs). Associates at promoter regions of tumor suppressor genes (TSGs) leading to their gene silencing. Promotes tumor growth. The sequence is that of DNA (cytosine-5)-methyltransferase 1 (Dnmt1) from Rattus norvegicus (Rat).